The following is a 226-amino-acid chain: Ribonuclease 3 (226 aa).

An RNase III domain is found at 6-128 (INRLQRKLGY…LIGGVFLDSD (123 aa)). Residue glutamate 41 participates in Mg(2+) binding. Residue aspartate 45 is part of the active site. 2 residues coordinate Mg(2+): aspartate 114 and glutamate 117. Glutamate 117 is a catalytic residue. In terms of domain architecture, DRBM spans 155-225 (DPKTRLQEFL…AEQALIKLEL (71 aa)).

Belongs to the ribonuclease III family. Homodimer. Mg(2+) serves as cofactor.

The protein resides in the cytoplasm. It carries out the reaction Endonucleolytic cleavage to 5'-phosphomonoester.. Digests double-stranded RNA. Involved in the processing of primary rRNA transcript to yield the immediate precursors to the large and small rRNAs (23S and 16S). Processes some mRNAs, and tRNAs when they are encoded in the rRNA operon. Processes pre-crRNA and tracrRNA of type II CRISPR loci if present in the organism. This is Ribonuclease 3 from Serratia proteamaculans (strain 568).